A 601-amino-acid chain; its full sequence is uncharacterized protein (601 aa).

A disordered region spans residues 127–364 (SSLFSSGSPP…PAFANDDTVH (238 aa)). Polar residues predominate over residues 128–137 (SLFSSGSPPD). The span at 141 to 154 (RNSTSNLSSVSTNS) shows a compositional bias: low complexity. Composition is skewed to polar residues over residues 159–177 (TIGS…ASQR), 199–213 (ALSS…NVTP), and 232–250 (SATN…SPSQ). Ser-247 and Ser-281 each carry phosphoserine. Residues 265 to 281 (SLSSSPSSEDSDLSLSS) are compositionally biased toward low complexity. Composition is skewed to basic and acidic residues over residues 286-296 (DEKKQPSKSEK) and 313-325 (GSKE…KEKA). At Ser-335 the chain carries Phosphoserine. A compositionally biased stretch (polar residues) spans 338–356 (DTSTEYDSNSLRRSRSNPA).

This is an uncharacterized protein from Schizosaccharomyces pombe (strain 972 / ATCC 24843) (Fission yeast).